The sequence spans 60 residues: Large ribosomal subunit protein uL30 (60 aa).

Belongs to the universal ribosomal protein uL30 family. In terms of assembly, part of the 50S ribosomal subunit.

The sequence is that of Large ribosomal subunit protein uL30 from Streptococcus gordonii (strain Challis / ATCC 35105 / BCRC 15272 / CH1 / DL1 / V288).